The following is a 305-amino-acid chain: Homoserine O-acetyltransferase (305 aa).

Cysteine 142 acts as the Acyl-thioester intermediate in catalysis. Positions 163 and 192 each coordinate substrate. The active-site Proton acceptor is the histidine 235. Glutamate 237 is a catalytic residue. Arginine 249 is a binding site for substrate.

It belongs to the MetA family.

The protein localises to the cytoplasm. The catalysed reaction is L-homoserine + acetyl-CoA = O-acetyl-L-homoserine + CoA. Its pathway is amino-acid biosynthesis; L-methionine biosynthesis via de novo pathway; O-acetyl-L-homoserine from L-homoserine: step 1/1. Transfers an acetyl group from acetyl-CoA to L-homoserine, forming acetyl-L-homoserine. The polypeptide is Homoserine O-acetyltransferase (Phocaeicola vulgatus (strain ATCC 8482 / DSM 1447 / JCM 5826 / CCUG 4940 / NBRC 14291 / NCTC 11154) (Bacteroides vulgatus)).